The primary structure comprises 318 residues: Acetyl-coenzyme A carboxylase carboxyl transferase subunit alpha (318 aa).

The CoA carboxyltransferase C-terminal domain occupies 39–293; sequence KLEKKVDKMR…HEALARHLKE (255 aa).

This sequence belongs to the AccA family. As to quaternary structure, acetyl-CoA carboxylase is a heterohexamer composed of biotin carboxyl carrier protein (AccB), biotin carboxylase (AccC) and two subunits each of ACCase subunit alpha (AccA) and ACCase subunit beta (AccD).

Its subcellular location is the cytoplasm. The catalysed reaction is N(6)-carboxybiotinyl-L-lysyl-[protein] + acetyl-CoA = N(6)-biotinyl-L-lysyl-[protein] + malonyl-CoA. It functions in the pathway lipid metabolism; malonyl-CoA biosynthesis; malonyl-CoA from acetyl-CoA: step 1/1. In terms of biological role, component of the acetyl coenzyme A carboxylase (ACC) complex. First, biotin carboxylase catalyzes the carboxylation of biotin on its carrier protein (BCCP) and then the CO(2) group is transferred by the carboxyltransferase to acetyl-CoA to form malonyl-CoA. The chain is Acetyl-coenzyme A carboxylase carboxyl transferase subunit alpha from Geobacter metallireducens (strain ATCC 53774 / DSM 7210 / GS-15).